A 476-amino-acid polypeptide reads, in one-letter code: Angiotensinogen (476 aa).

The signal sequence occupies residues 1–24; it reads MAPAGLSLGAAILCLLAWAGLAAG. Cysteine 42 and cysteine 161 are oxidised to a cystine. N-linked (GlcNAc...) asparagine glycosylation is found at asparagine 295, asparagine 319, asparagine 362, and asparagine 401.

This sequence belongs to the serpin family. In response to low blood pressure, the enzyme renin/REN cleaves angiotensinogen to produce angiotensin-1. Angiotensin-1 is a substrate of ACE (angiotensin converting enzyme) that removes a dipeptide to yield the physiologically active peptide angiotensin-2. Angiotensin-1 and angiotensin-2 can be further processed to generate angiotensin-3, angiotensin-4. Angiotensin 1-9 is cleaved from angiotensin-1 by ACE2 and can be further processed by ACE to produce angiotensin 1-7, angiotensin 1-5 and angiotensin 1-4. Angiotensin 1-7 has also been proposed to be cleaved from angiotensin-2 by ACE2 or from angiotensin-1 by MME (neprilysin). Post-translationally, the disulfide bond is labile. Angiotensinogen is present in the circulation in a near 40:60 ratio with the oxidized disulfide-bonded form, which preferentially interacts with receptor-bound renin.

It is found in the secreted. In terms of biological role, essential component of the renin-angiotensin system (RAS), a potent regulator of blood pressure, body fluid and electrolyte homeostasis. Acts directly on vascular smooth muscle as a potent vasoconstrictor, affects cardiac contractility and heart rate through its action on the sympathetic nervous system, and alters renal sodium and water absorption through its ability to stimulate the zona glomerulosa cells of the adrenal cortex to synthesize and secrete aldosterone. Acts by binding to angiotensin receptors AGTR1 and AGTR2. Also binds the DEAR/FBXW7-AS1 receptor. Its function is as follows. Stimulates aldosterone release. Functionally, is a ligand for the G-protein coupled receptor MAS1. Has vasodilator and antidiuretic effects. Has an antithrombotic effect that involves MAS1-mediated release of nitric oxide from platelets. The sequence is that of Angiotensinogen (AGT) from Bos taurus (Bovine).